We begin with the raw amino-acid sequence, 308 residues long: Transaldolase (308 aa).

K125 serves as the catalytic Schiff-base intermediate with substrate.

This sequence belongs to the transaldolase family. Type 1 subfamily. Homodimer.

Its subcellular location is the cytoplasm. It catalyses the reaction D-sedoheptulose 7-phosphate + D-glyceraldehyde 3-phosphate = D-erythrose 4-phosphate + beta-D-fructose 6-phosphate. It functions in the pathway carbohydrate degradation; pentose phosphate pathway; D-glyceraldehyde 3-phosphate and beta-D-fructose 6-phosphate from D-ribose 5-phosphate and D-xylulose 5-phosphate (non-oxidative stage): step 2/3. Functionally, transaldolase is important for the balance of metabolites in the pentose-phosphate pathway. The polypeptide is Transaldolase (Pseudomonas putida (strain GB-1)).